The chain runs to 307 residues: Serine/threonine-protein phosphatase PP2A-5 catalytic subunit (307 aa).

The Mn(2+) site is built by D55, H57, D83, and N115. H116 serves as the catalytic Proton donor. 2 residues coordinate Mn(2+): H165 and H239. At L307 the chain carries Leucine methyl ester.

The protein belongs to the PPP phosphatase family. PP-2A subfamily. In terms of assembly, PP2A consists of a common heterodimeric core enzyme, composed of a 36 kDa catalytic subunit (subunit C) and a 65 kDa constant regulatory subunit (subunit A), that associates with a variety of regulatory subunits such as subunits B (the R2/B/PR55/B55, R3/B''/PR72/PR130/PR59 and R5/B'/B56 families). Also interacts with CHIP and TAF12B. Interacts with B'THETA. Interacts with CLC-A, CLC-B, CLC-C and CLC-G. It depends on Mn(2+) as a cofactor. Reversibly methyl esterified on Leu-307 by leucine carboxyl methyltransferase 1 (LCMT1) and pectin methylesterase 1 (PME1). Carboxyl methylation influences the affinity of the catalytic subunit for the different regulatory subunits, thereby modulating the PP2A holoenzyme's substrate specificity, enzyme activity and cellular localization. Post-translationally, phosphorylation of either threonine (by autophosphorylation-activated protein kinase) or tyrosine results in inactivation of the phosphatase. Auto-dephosphorylation has been suggested as a mechanism for reactivation. In terms of processing, ubiquitinated. CHIP-mediated ubiquitination enhances phosphatase activity after an abiotic stress such as low temperature or darkness.

It localises to the cytoplasm. Its subcellular location is the cytosol. The protein localises to the peroxisome. The enzyme catalyses O-phospho-L-seryl-[protein] + H2O = L-seryl-[protein] + phosphate. It carries out the reaction O-phospho-L-threonyl-[protein] + H2O = L-threonyl-[protein] + phosphate. Associates with the serine/threonine-protein phosphatase PP2A regulatory subunits A and B' to positively regulates beta-oxidation of fatty acids and protoauxins in peroxisomes by dephosphorylating peroxisomal beta-oxidation-related proteins. Involved in the positive regulation of salt stress responses. May function by increasing chloride channel activities on vacuolar membranes. This chain is Serine/threonine-protein phosphatase PP2A-5 catalytic subunit, found in Arabidopsis thaliana (Mouse-ear cress).